The primary structure comprises 951 residues: Leucine-rich repeat-containing G-protein coupled receptor 4 (951 aa).

A signal peptide spans 1 to 19 (MPGPLGLLCFLALGLRGSA). Topologically, residues 20 to 544 (EPSGAAPPLC…LLGSWMIRLT (525 aa)) are extracellular. Residues 25 to 57 (APPLCAAPCSCDGDRRVDCSGKGLTAVPEGLSA) form the LRRNT domain. 2 cysteine pairs are disulfide-bonded: Cys-29/Cys-35 and Cys-33/Cys-43. LRR repeat units follow at residues 35–58 (CDGD…LSAF), 59–79 (TQLL…AFKN), 81–103 (PFLE…ALSG), 104–127 (LKEL…AIRG), 128–151 (LSSL…SFEG), 153–175 (TQLR…PLSN), 176–199 (LPTL…AFTN), 201–223 (SSLV…CFDG), 224–247 (LDNL…IKAL), 248–270 (PSLK…AFDG), and 272–294 (PLLK…AFHN). N-linked (GlcNAc...) asparagine glycosylation is present at Asn-68. An N-linked (GlcNAc...) asparagine glycan is attached at Asn-199. N-linked (GlcNAc...) asparagine glycosylation is found at Asn-294 and Asn-314. 5 LRR repeats span residues 318-341 (TVRL…LCQE), 342-363 (QKRL…SFNG), 364-387 (CHAL…TFQG), 388-411 (LTSL…AFAK), and 413-435 (GSIT…GLNG). Cys-339 and Cys-364 are disulfide-bonded. Cystine bridges form between Cys-470/Cys-522 and Cys-471/Cys-476. A helical membrane pass occupies residues 545 to 565 (VWFIFLVALFFNLLVILTTFA). The Cytoplasmic segment spans residues 566 to 575 (SCTSVPSSKL). A helical transmembrane segment spans residues 576 to 596 (FIGLISVSNLFMGAYTGILTF). Residues 597–619 (LDAVSWGRFAEFGIWWEIGSGCK) are Extracellular-facing. Cys-618 and Cys-693 are disulfide-bonded. The chain crosses the membrane as a helical span at residues 620 to 640 (IAGFLAVFSSESAIFLLMLAA). Over 641–661 (VERSLSAKDMMKNGKSNHLRQ) the chain is Cytoplasmic. The chain crosses the membrane as a helical span at residues 662–682 (FRIAALLAFLGAAVAGSFPLF). Residues 683–703 (HRGEYSASPLCLPFPTGETPS) are Extracellular-facing. The helical transmembrane segment at 704-724 (LGFTVTLVLLNSLAFLLMAII) threads the bilayer. At 725–756 (YTKLYCNLEKEDLSESSQSSMIKHVAWLIFTN) the chain is on the cytoplasmic side. Residues 757 to 777 (CIFFCPVAFFSFAPLITAVSI) form a helical membrane-spanning segment. Over 778–783 (SPEIMK) the chain is Extracellular. Residues 784–804 (SVTLIFFPLPACLNPVLYVFF) traverse the membrane as a helical segment. Residues 805 to 951 (NPKFKEDWKL…YAYNLPRVKD (147 aa)) lie on the Cytoplasmic side of the membrane. Ser-920 carries the phosphoserine modification.

Belongs to the G-protein coupled receptor 1 family.

The protein resides in the cell membrane. Its function is as follows. Receptor for R-spondins that potentiates the canonical Wnt signaling pathway and is involved in the formation of various organs. Upon binding to R-spondins (RSPO1, RSPO2, RSPO3 or RSPO4), associates with phosphorylated LRP6 and frizzled receptors that are activated by extracellular Wnt receptors, triggering the canonical Wnt signaling pathway to increase expression of target genes. In contrast to classical G-protein coupled receptors, does not activate heterotrimeric G-proteins to transduce the signal. Its function as activator of the Wnt signaling pathway is required for the development of various organs, including liver, kidney, intestine, bone, reproductive tract and eye. May also act as a receptor for norrin (NDP), such results however required additional confirmation in vivo. Required during spermatogenesis to activate the Wnt signaling pathway in peritubular myoid cells. Required for the maintenance of intestinal stem cells and Paneth cell differentiation in postnatal intestinal crypts. Acts as a regulator of bone formation and remodeling. Involved in kidney development; required for maintaining the ureteric bud in an undifferentiated state. Involved in the development of the anterior segment of the eye. Required during erythropoiesis. Also acts as a negative regulator of innate immunity by inhibiting TLR2/TLR4 associated pattern-recognition and pro-inflammatory cytokine production. Plays an important role in regulating the circadian rhythms of plasma lipids, partially through regulating the rhythmic expression of MTTP. Required for proper development of GnRH neurons (gonadotropin-releasing hormone expressing neurons) that control the release of reproductive hormones from the pituitary gland. This is Leucine-rich repeat-containing G-protein coupled receptor 4 (LGR4) from Bos taurus (Bovine).